A 466-amino-acid polypeptide reads, in one-letter code: Putative outer membrane protein NMB0088 (466 aa).

Residues 1 to 24 (MTPSALKKTVLLLGTAFAAASVHA) form the signal peptide.

It belongs to the OmpP1/FadL family.

The protein localises to the cell outer membrane. The sequence is that of Putative outer membrane protein NMB0088 from Neisseria meningitidis serogroup B (strain ATCC BAA-335 / MC58).